The sequence spans 567 residues: MAQPPRLSRSGASSLWDPASPAPTSGPRPRLWEGQDVLARWTDGLLYLGTIKKVDSAREVCLVQFEDDSQFLVLWKDISPAALPGEELLCCVCRSETVVPGNRLVSCEKCRHAYHQDCHVPRAPAPGEGEGTSWVCRQCVFAIATKRGGALKKGPYARAMLGMKLSLPYGLKGLDWDAGHLSNRQQSYCYCGGPGEWNLKMLQCRSCLQWFHEACTQCLSKPLLYGDRFYEFECCVCRGGPEKVRRLQLRWVDVAHLVLYHLSVCCKKKYFDFDREILPFTSENWDSLLLGELSDTPKGERSSRLLSALNSHKDRFISGREIKKRKCLFGLHARMPPPVEPPTGDGALTSFPSGQGPGGGVSRPLGKRRRPEPEPLRRRQKGKVEELGPPSAVRNQPEPQEQRERAHLQRALQASVSPPSPSPNQSYQGSSGYNFRPTDARCLPSSPIRMFASFHPSASTAGTSGDSGPPDRSPLELHIGFPTDIPKSAPHSMTASSSSVSSPSPGLPRRSAPPSPLCRSLSPGTGGGVRGGVGYLSRGDPVRVLARRVRPDGSVQYLVEWGGGGIF.

The segment at 1–31 (MAQPPRLSRSGASSLWDPASPAPTSGPRPRL) is disordered. The 58-residue stretch at 29 to 86 (PRLWEGQDVLARWTDGLLYLGTIKKVDSAREVCLVQFEDDSQFLVLWKDISPAALPGE) folds into the Tudor domain. 2 PHD-type zinc fingers span residues 87 to 142 (ELLC…CVFA) and 186 to 240 (QSYC…CRGG). 2 disordered regions span residues 333 to 441 (ARMP…TDAR) and 455 to 537 (HPSA…GYLS). At Gly-360 the chain carries Phosphoserine. Residues 371 to 386 (PEPEPLRRRQKGKVEE) show a composition bias toward basic and acidic residues. Residue Ser-420 is modified to Phosphoserine. Low complexity-rich tracts occupy residues 423 to 433 (PNQSYQGSSGY), 456 to 470 (PSAS…SGPP), and 488 to 510 (SAPH…LPRR). Positions 524 to 534 (GTGGGVRGGVG) are enriched in gly residues.

Belongs to the Polycomblike family. As to quaternary structure, interacts with CHMP1. Associated component of the PRC2 complex. Interacts with p53/TP53. Highest levels in heart, skeletal muscle, and pancreas, lower levels in brain, placenta, lung, liver and kidney.

It localises to the nucleus. Its subcellular location is the cytoplasm. It is found in the cytoskeleton. The protein resides in the microtubule organizing center. The protein localises to the centrosome. Polycomb group (PcG) that specifically binds histone H3 trimethylated at 'Lys-36' (H3K36me3) and recruits the PRC2 complex. Involved in DNA damage response and is recruited at double-strand breaks (DSBs). Acts by binding to H3K36me3, a mark for transcriptional activation, and recruiting the PRC2 complex: it is however unclear whether recruitment of the PRC2 complex to H3K36me3 leads to enhance or inhibit H3K27me3 methylation mediated by the PRC2 complex. According to some reports, PRC2 recruitment by PHF1 promotes H3K27me3 and subsequent gene silencing by inducing spreading of PRC2 and H3K27me3 into H3K36me3 loci. According to another report, PHF1 recruits the PRC2 complex at double-strand breaks (DSBs) and inhibits the activity of PRC2. Regulates p53/TP53 stability and prolonges its turnover: may act by specifically binding to a methylated from of p53/TP53. In Homo sapiens (Human), this protein is PHD finger protein 1 (PHF1).